We begin with the raw amino-acid sequence, 208 residues long: Uridine kinase (208 aa).

12–19 is an ATP binding site; sequence GGSGGGKT.

It belongs to the uridine kinase family.

The protein localises to the cytoplasm. The enzyme catalyses uridine + ATP = UMP + ADP + H(+). The catalysed reaction is cytidine + ATP = CMP + ADP + H(+). The protein operates within pyrimidine metabolism; CTP biosynthesis via salvage pathway; CTP from cytidine: step 1/3. Its pathway is pyrimidine metabolism; UMP biosynthesis via salvage pathway; UMP from uridine: step 1/1. The polypeptide is Uridine kinase (Streptococcus equi subsp. equi (strain 4047)).